The following is a 212-amino-acid chain: Peroxisomal membrane protein 4 (212 aa).

Asn-57 is a glycosylation site (N-linked (GlcNAc...) asparagine). 2 helical membrane passes run 97-117 (GKTYPAHAFLAAFLGGILVFG) and 153-173 (WDPFPLLTAVVWGLVLWLFEY). Asn-206 carries N-linked (GlcNAc...) asparagine glycosylation.

Belongs to the peroxisomal membrane protein PXMP2/4 family. In terms of assembly, interacts with PEX19. As to expression, expressed in normal prostate epithelial cells, and androgen-sensitive prostate adenocarcinoma cells. Not expressed in androgen-insensitive prostate adenocarcinoma cells.

Its subcellular location is the peroxisome membrane. This Homo sapiens (Human) protein is Peroxisomal membrane protein 4 (PXMP4).